The chain runs to 202 residues: Small ribosomal subunit protein uS4 (202 aa).

The interval 23 to 42 (RKAARRSYPPGQHGQARRKR) is disordered. Positions 90–154 (MRLDNLVFRL…SRKLVTANLE (65 aa)) constitute an S4 RNA-binding domain.

Belongs to the universal ribosomal protein uS4 family. Part of the 30S ribosomal subunit. Contacts protein S5. The interaction surface between S4 and S5 is involved in control of translational fidelity.

One of the primary rRNA binding proteins, it binds directly to 16S rRNA where it nucleates assembly of the body of the 30S subunit. Its function is as follows. With S5 and S12 plays an important role in translational accuracy. This Synechococcus elongatus (strain ATCC 33912 / PCC 7942 / FACHB-805) (Anacystis nidulans R2) protein is Small ribosomal subunit protein uS4.